Consider the following 874-residue polypeptide: Lon protease (874 aa).

The 244-residue stretch at 18–261 folds into the Lon N-terminal domain; sequence LPVLPLDDAV…RLLTWTKEHL (244 aa). Disordered stretches follow at residues 47 to 68, 120 to 144, and 298 to 318; these read VDAARTGGSAGSSDARAPGISS, GGVRPAPAGTDTTGTGTADATSGAG, and LSELDGSGGGADGASGSEPAD. A compositionally biased stretch (low complexity) spans 124–142; sequence PAPAGTDTTGTGTADATSG. Position 430–437 (430–437) interacts with ATP; that stretch reads GPPGVGKT. Residues 667–851 form the Lon proteolytic domain; the sequence is TALPGVATGL…REVLDLALEP (185 aa). Residues Ser-757 and Lys-800 contribute to the active site. The tract at residues 853-874 is disordered; it reads FDADHGGRSPGRAGHSPTALAA.

It belongs to the peptidase S16 family. In terms of assembly, homohexamer. Organized in a ring with a central cavity.

It is found in the cytoplasm. It carries out the reaction Hydrolysis of proteins in presence of ATP.. Functionally, ATP-dependent serine protease that mediates the selective degradation of mutant and abnormal proteins as well as certain short-lived regulatory proteins. Required for cellular homeostasis and for survival from DNA damage and developmental changes induced by stress. Degrades polypeptides processively to yield small peptide fragments that are 5 to 10 amino acids long. Binds to DNA in a double-stranded, site-specific manner. The chain is Lon protease from Frankia alni (strain DSM 45986 / CECT 9034 / ACN14a).